The chain runs to 218 residues: Pyridoxine/pyridoxamine 5'-phosphate oxidase (218 aa).

Residues 14–17 (RREY) and lysine 72 each bind substrate. FMN contacts are provided by residues 67 to 72 (RIVLLK), 82 to 83 (YT), arginine 88, lysine 89, and glutamine 111. Substrate is bound by residues tyrosine 129, arginine 133, and serine 137. FMN is bound by residues 146 to 147 (QS) and tryptophan 191. Position 197–199 (197–199 (RLH)) interacts with substrate. Arginine 201 contacts FMN.

This sequence belongs to the pyridoxamine 5'-phosphate oxidase family. In terms of assembly, homodimer. FMN serves as cofactor.

It carries out the reaction pyridoxamine 5'-phosphate + O2 + H2O = pyridoxal 5'-phosphate + H2O2 + NH4(+). It catalyses the reaction pyridoxine 5'-phosphate + O2 = pyridoxal 5'-phosphate + H2O2. Its pathway is cofactor metabolism; pyridoxal 5'-phosphate salvage; pyridoxal 5'-phosphate from pyridoxamine 5'-phosphate: step 1/1. It participates in cofactor metabolism; pyridoxal 5'-phosphate salvage; pyridoxal 5'-phosphate from pyridoxine 5'-phosphate: step 1/1. In terms of biological role, catalyzes the oxidation of either pyridoxine 5'-phosphate (PNP) or pyridoxamine 5'-phosphate (PMP) into pyridoxal 5'-phosphate (PLP). The sequence is that of Pyridoxine/pyridoxamine 5'-phosphate oxidase from Escherichia coli (strain SMS-3-5 / SECEC).